A 675-amino-acid chain; its full sequence is DNA ligase (675 aa).

NAD(+)-binding positions include 36 to 40 (DAAYD), 85 to 86 (SL), and glutamate 117. The active-site N6-AMP-lysine intermediate is lysine 119. Arginine 140, glutamate 177, lysine 294, and lysine 318 together coordinate NAD(+). Positions 412, 415, 430, and 436 each coordinate Zn(2+). The region spanning 597 to 675 (AEDLPLSGNT…EAEFLELIGE (79 aa)) is the BRCT domain.

It belongs to the NAD-dependent DNA ligase family. LigA subfamily. Mg(2+) serves as cofactor. Requires Mn(2+) as cofactor.

It carries out the reaction NAD(+) + (deoxyribonucleotide)n-3'-hydroxyl + 5'-phospho-(deoxyribonucleotide)m = (deoxyribonucleotide)n+m + AMP + beta-nicotinamide D-nucleotide.. DNA ligase that catalyzes the formation of phosphodiester linkages between 5'-phosphoryl and 3'-hydroxyl groups in double-stranded DNA using NAD as a coenzyme and as the energy source for the reaction. It is essential for DNA replication and repair of damaged DNA. This is DNA ligase from Thioalkalivibrio sulfidiphilus (strain HL-EbGR7).